Here is a 2378-residue protein sequence, read N- to C-terminus: Serine/threonine-protein kinase ATM (2378 aa).

The 523-residue stretch at 1415–1937 (LSARKRNTMM…LHTILMYDDE (523 aa)) folds into the FAT domain. The PI3K/PI4K catalytic domain occupies 2044 to 2366 (WKDVFTIADG…LLREATSADN (323 aa)). The tract at residues 2050 to 2056 (IADGIST) is G-loop. Positions 2218–2226 (GLGDRHASN) are catalytic loop. An activation loop region spans residues 2238–2263 (HIDLGMILEYSKRTLPVPEQVPFRIT). The FATC domain maps to 2346-2378 (TAQSSNLQIRRLLREATSADNLSRMFCGWMPFL).

The protein belongs to the PI3/PI4-kinase family. ATM subfamily.

Its subcellular location is the nucleus. It catalyses the reaction L-seryl-[protein] + ATP = O-phospho-L-seryl-[protein] + ADP + H(+). The catalysed reaction is L-threonyl-[protein] + ATP = O-phospho-L-threonyl-[protein] + ADP + H(+). Its function is as follows. Serine/threonine protein kinase which activates checkpoint signaling in the presence of DNA double strand breaks (DSBs) and other forms of DNA damage induced by ionizing radiation and other genotoxic stresses such as UV. Plays a role in maintaining genome stability. The chain is Serine/threonine-protein kinase ATM (atm-1) from Caenorhabditis elegans.